The following is a 370-amino-acid chain: Cobalt-precorrin-5B C(1)-methyltransferase (370 aa).

Belongs to the CbiD family.

It carries out the reaction Co-precorrin-5B + S-adenosyl-L-methionine = Co-precorrin-6A + S-adenosyl-L-homocysteine. It participates in cofactor biosynthesis; adenosylcobalamin biosynthesis; cob(II)yrinate a,c-diamide from sirohydrochlorin (anaerobic route): step 6/10. Functionally, catalyzes the methylation of C-1 in cobalt-precorrin-5B to form cobalt-precorrin-6A. In Prochlorococcus marinus (strain MIT 9215), this protein is Cobalt-precorrin-5B C(1)-methyltransferase.